Reading from the N-terminus, the 333-residue chain is Ribosomal protein L11 methyltransferase (333 aa).

S-adenosyl-L-methionine contacts are provided by threonine 181, glycine 202, aspartate 224, and asparagine 268.

It belongs to the methyltransferase superfamily. PrmA family.

Its subcellular location is the cytoplasm. The catalysed reaction is L-lysyl-[protein] + 3 S-adenosyl-L-methionine = N(6),N(6),N(6)-trimethyl-L-lysyl-[protein] + 3 S-adenosyl-L-homocysteine + 3 H(+). Its function is as follows. Methylates ribosomal protein L11. This Helicobacter pylori (strain ATCC 700392 / 26695) (Campylobacter pylori) protein is Ribosomal protein L11 methyltransferase.